The following is a 174-amino-acid chain: Peptide deformylase (174 aa).

Residues C96 and H138 each contribute to the Fe cation site. E139 is an active-site residue. Position 142 (H142) interacts with Fe cation.

It belongs to the polypeptide deformylase family. Requires Fe(2+) as cofactor.

The catalysed reaction is N-terminal N-formyl-L-methionyl-[peptide] + H2O = N-terminal L-methionyl-[peptide] + formate. Functionally, removes the formyl group from the N-terminal Met of newly synthesized proteins. Requires at least a dipeptide for an efficient rate of reaction. N-terminal L-methionine is a prerequisite for activity but the enzyme has broad specificity at other positions. The polypeptide is Peptide deformylase (Helicobacter pylori (strain P12)).